A 196-amino-acid chain; its full sequence is N-acetylglucosaminyltransferase (196 aa).

This sequence belongs to the NodC/HAS family.

It is found in the cell membrane. In terms of biological role, involved in the synthesis of Nod factor, a sulfated N-acyl-beta-1,4-tetrasaccharide of N-acetylglucosamine which initiates a series of events in the host plant species leading eventually to nodulation. The polypeptide is N-acetylglucosaminyltransferase (nodC) (Rhizobium sp. (strain MPIK3030)).